Here is a 201-residue protein sequence, read N- to C-terminus: FMN-dependent NADH:quinone oxidoreductase (201 aa).

FMN is bound by residues Ser10, 16 to 18 (SQS), 96 to 99 (MYNF), and 140 to 143 (SRGG).

Belongs to the azoreductase type 1 family. Homodimer. Requires FMN as cofactor.

The catalysed reaction is 2 a quinone + NADH + H(+) = 2 a 1,4-benzosemiquinone + NAD(+). It catalyses the reaction N,N-dimethyl-1,4-phenylenediamine + anthranilate + 2 NAD(+) = 2-(4-dimethylaminophenyl)diazenylbenzoate + 2 NADH + 2 H(+). Its function is as follows. Quinone reductase that provides resistance to thiol-specific stress caused by electrophilic quinones. Functionally, also exhibits azoreductase activity. Catalyzes the reductive cleavage of the azo bond in aromatic azo compounds to the corresponding amines. The polypeptide is FMN-dependent NADH:quinone oxidoreductase (Yersinia pseudotuberculosis serotype O:1b (strain IP 31758)).